The primary structure comprises 251 residues: MSSFDRRIEAACKFDDERYYKQYHRYFDVLAQVHSVVETINGAQMLRVWRGRKFGPGASAERRERRLFHVTQDSFKRYIVPPNPRIGKAIEENGKELLIEIDVYDDHRDGLKNLNSGDFVAIQNVHAASTRQTEMQVLHGGGASYQRGITTVPVDFEHEAFQNFKKKVEAVLETVAYDENFTEFQQPEEVAENHVDEEPQEEALPRGVVLRTETCDFMDMELDNWPEGPPKTFAEAIARANNSRRPRDPPQ.

A disordered region spans residues 221–251; the sequence is ELDNWPEGPPKTFAEAIARANNSRRPRDPPQ.

It belongs to the telombin family.

Its subcellular location is the nucleus. It is found in the chromosome. The protein localises to the telomere. Its function is as follows. Telomeric DNA-binding protein, which binds to two or more single-stranded G-rich repeat sequences (G-strand), with high specificity to the 5'-TTAGGC-3' sequence. In addition, repeat sequence binding requires a 3' single-stranded telomeric overhang. Acts redundantly with pot-1 to negatively regulate telomerase-mediated telomere extension. Also regulates telomere length by the telomerase-independent telomere maintenance pathway called ALT (alternative lengthening of telomeres). Does not appear to have a role in anchoring telomeres to the nuclear envelope. The sequence is that of Protection of telomeres homolog 2 from Caenorhabditis elegans.